The sequence spans 224 residues: Putative MgpC-like protein MPN_150 (224 aa).

Belongs to the MgpC family.

The polypeptide is Putative MgpC-like protein MPN_150 (Mycoplasma pneumoniae (strain ATCC 29342 / M129 / Subtype 1) (Mycoplasmoides pneumoniae)).